Consider the following 979-residue polypeptide: Pro-apoptotic serine protease NMA111 (979 aa).

Residues 1–20 show a composition bias toward basic and acidic residues; that stretch reads MKRNGESHLNGEAKKSRTEQ. Residues 1-43 form a disordered region; that stretch reads MKRNGESHLNGEAKKSRTEQNQEQQDYQDEYYSSSDEELLPSS. A compositionally biased stretch (low complexity) spans 21 to 34; sequence NQEQQDYQDEYYSS. A serine protease region spans residues 65 to 260; sequence KVVNSVVSIQ…LPVSRPKRAL (196 aa). Active-site charge relay system residues include His108, Asp139, and Ser222. PDZ domains follow at residues 277 to 362 and 871 to 943; these read EWQL…FVFQ and PHYG…VSFD.

The protein belongs to the peptidase S1C family.

It is found in the nucleus. Its function is as follows. Nuclear serine protease which mediates apoptosis. The sequence is that of Pro-apoptotic serine protease NMA111 (NMA111) from Lodderomyces elongisporus (strain ATCC 11503 / CBS 2605 / JCM 1781 / NBRC 1676 / NRRL YB-4239) (Yeast).